Here is a 157-residue protein sequence, read N- to C-terminus: Protein Smg homolog (157 aa).

It belongs to the Smg family.

The sequence is that of Protein Smg homolog from Shewanella loihica (strain ATCC BAA-1088 / PV-4).